A 182-amino-acid chain; its full sequence is uncharacterized protein (182 aa).

BNR repeat units follow at residues 58 to 69 (WISFDAGENWET) and 102 to 113 (YITDDRGESWRA).

This is an uncharacterized protein from Saccharomyces cerevisiae (strain ATCC 204508 / S288c) (Baker's yeast).